The following is a 254-amino-acid chain: Phosphomannomutase (254 aa).

Catalysis depends on Asp19, which acts as the Nucleophile. Residues Asp19 and Asp21 each contribute to the Mg(2+) site. The active-site Proton donor/acceptor is Asp21. Arg28, Arg130, Arg141, Arg148, Ser186, and Asp188 together coordinate alpha-D-mannose 1-phosphate. 4 residues coordinate Mg(2+): Asp216, Phe228, Asp230, and Thr233. Phosphoserine is present on Ser240.

The protein belongs to the eukaryotic PMM family. In terms of assembly, homodimer.

It localises to the cytoplasm. It carries out the reaction alpha-D-mannose 1-phosphate = D-mannose 6-phosphate. The protein operates within nucleotide-sugar biosynthesis; GDP-alpha-D-mannose biosynthesis; alpha-D-mannose 1-phosphate from D-fructose 6-phosphate: step 2/2. Its function is as follows. Involved in the synthesis of the GDP-mannose and dolichol-phosphate-mannose required for a number of critical mannosyl transfer reactions such as folding and glycosylation of secretory proteins in the ER lumen. The sequence is that of Phosphomannomutase from Saccharomyces cerevisiae (strain ATCC 204508 / S288c) (Baker's yeast).